Here is a 203-residue protein sequence, read N- to C-terminus: Linker for activation of T-cells family member 2 (203 aa).

Over 1-6 the chain is Extracellular; sequence MSAELE. Residues 7-27 traverse the membrane as a helical; Signal-anchor for type III membrane protein segment; sequence LLWPVSGLLLLLLGATAWLCV. Residues Cys26 and Cys29 are each lipidated (S-palmitoyl cysteine). Residues 28–203 lie on the Cytoplasmic side of the membrane; that stretch reads HCSRPGVKRN…NGDVAAAENI (176 aa). Tyr59 carries the phosphotyrosine modification. Residues Ser60 and Ser95 each carry the phosphoserine modification. Tyr139, Tyr160, and Tyr192 each carry phosphotyrosine. Positions 171-203 are disordered; sequence ESKRTMGAPMSLSGSPDEEPDYVNGDVAAAENI.

When phosphorylated, interacts with GRB2. May also interact with SOS1, GAB1 and CBL. In terms of processing, phosphorylated on tyrosines following cross-linking of BCR in B-cells, high affinity IgG receptor (FCGR1) in myeloid cells, or high affinity IgE receptor (FCER1) in mast cells; which induces the recruitment of GRB2. Strongly expressed in testis. Expressed in heart, spleen and lung. Present in B-cells and mast cells (at protein level).

The protein localises to the cell membrane. Functionally, involved in FCER1 (high affinity immunoglobulin epsilon receptor)-mediated signaling in mast cells. May also be involved in BCR (B-cell antigen receptor)-mediated signaling in B-cells and FCGR1 (high affinity immunoglobulin gamma Fc receptor I)-mediated signaling in myeloid cells. Couples activation of these receptors and their associated kinases with distal intracellular events through the recruitment of GRB2. This Mus musculus (Mouse) protein is Linker for activation of T-cells family member 2 (Lat2).